A 467-amino-acid polypeptide reads, in one-letter code: Retinoic acid receptor RXR-gamma (467 aa).

Residues 1 to 142 (MYGNYPHFIK…TSPGSLAKHI (142 aa)) form a modulating region. 2 NR C4-type zinc fingers span residues 143–163 (CAIC…CEGC) and 179–203 (CRDN…YQKC). Positions 143–208 (CAICGDRSSG…RYQKCLAMGM (66 aa)) form a DNA-binding region, nuclear receptor. The tract at residues 209 to 232 (KREAVQEERQGSRERSENEAESTS) is hinge. The span at 214–226 (QEERQGSRERSEN) shows a compositional bias: basic and acidic residues. The segment at 214 to 237 (QEERQGSRERSENEAESTSGGSED) is disordered. Positions 235-463 (SEDMPVERIL…TFLMEMLETP (229 aa)) constitute an NR LBD domain.

It belongs to the nuclear hormone receptor family. NR2 subfamily. As to quaternary structure, homodimer. Heterodimer; with a RAR molecule. Binds DNA preferentially as a RAR/RXR heterodimer. Isoform 1 is highly expressed inliver. Isoform 2 is abundantly expressed in eye and dorsal root ganglia.

It localises to the nucleus. Receptor for retinoic acid. Retinoic acid receptors bind as heterodimers to their target response elements in response to their ligands, all-trans or 9-cis retinoic acid, and regulate gene expression in various biological processes. The RAR/RXR heterodimers bind to the retinoic acid response elements (RARE) composed of tandem 5'-AGGTCA-3' sites known as DR1-DR5. The high affinity ligand for RXRs is 9-cis retinoic acid. The chain is Retinoic acid receptor RXR-gamma (RXRG) from Gallus gallus (Chicken).